Consider the following 553-residue polypeptide: Meiotic expression up-regulated protein 18 (553 aa).

Residues 267-305 (SNETLCSNDSKHRIARLKNEDNTQKPISKKRKSKKASHK) form a disordered region. The span at 275-289 (DSKHRIARLKNEDNT) shows a compositional bias: basic and acidic residues. Residues 293-304 (ISKKRKSKKASH) show a composition bias toward basic residues.

The sequence is that of Meiotic expression up-regulated protein 18 (meu18) from Schizosaccharomyces pombe (strain 972 / ATCC 24843) (Fission yeast).